Consider the following 398-residue polypeptide: tRNA-specific 2-thiouridylase MnmA (398 aa).

ATP is bound by residues 19 to 26 (AMSGGVDS) and leucine 45. Catalysis depends on cysteine 113, which acts as the Nucleophile. Cysteines 113 and 210 form a disulfide. Residue glycine 137 coordinates ATP. Residues 160–162 (RDQ) are interaction with tRNA. The active-site Cysteine persulfide intermediate is the cysteine 210.

The protein belongs to the MnmA/TRMU family.

It is found in the cytoplasm. It catalyses the reaction S-sulfanyl-L-cysteinyl-[protein] + uridine(34) in tRNA + AH2 + ATP = 2-thiouridine(34) in tRNA + L-cysteinyl-[protein] + A + AMP + diphosphate + H(+). Functionally, catalyzes the 2-thiolation of uridine at the wobble position (U34) of tRNA, leading to the formation of s(2)U34. The protein is tRNA-specific 2-thiouridylase MnmA of Rhodopseudomonas palustris (strain BisB5).